Consider the following 682-residue polypeptide: Inactive protein-arginine deiminase type-6 (682 aa).

A phosphoserine mark is found at S2 and S434.

Belongs to the protein arginine deiminase family. As to quaternary structure, homodimers. Associates with alpha-tubulin. Post-translationally, phosphorylation at Ser-2, possibly by RSK-type kinases, and Ser-434 creates binding sites for 14-3-3 proteins. In terms of tissue distribution, expressed at very high levels in oocytes. Weakly expressed in testis. Expressed in primordial, primary, secondary and Graafian follicles, and in immature oocytes, mature eggs and blastocyst (at protein level).

The protein localises to the cytoplasm. It localises to the nucleus. Its subcellular location is the cytoplasmic vesicle. It is found in the secretory vesicle. The protein resides in the cortical granule. Functionally, structural constituent of cytoplasmic lattices, which plays a key role in early embryonic development. Cytoplasmic lattices consist in fibrous structures found in the cytoplasm of oocytes and preimplantation embryos. They are required to store maternal proteins critical for embryonic development, such as ribosomal proteins and proteins that control epigenetic reprogramming of the preimplantation embryo, and prevent their degradation or activation. In contrast to other members of the family, does not show protein-arginine deiminase activity due to its inability to bind Ca(2+). This Mus musculus (Mouse) protein is Inactive protein-arginine deiminase type-6.